The chain runs to 74 residues: Ubiquitin-like protein FUBI (74 aa).

It belongs to the ubiquitin family.

The protein is Ubiquitin-like protein FUBI (Fau) of Rattus norvegicus (Rat).